The following is a 32-amino-acid chain: Delta-conotoxin-like CnVIB (32 aa).

3 disulfides stabilise this stretch: cysteine 3–cysteine 18, cysteine 10–cysteine 22, and cysteine 17–cysteine 27. A 4-hydroxyproline mark is found at proline 6 and proline 14.

This sequence belongs to the conotoxin O1 superfamily. In terms of tissue distribution, expressed by the venom duct.

Its subcellular location is the secreted. In terms of biological role, delta-conotoxins bind to site 6 of voltage-gated sodium channels (Nav) and inhibit the inactivation process. This toxin acts on Nav1.4/SCN4A and Nav1.6/SCN8A (EC(50)=2.3 uM). The protein is Delta-conotoxin-like CnVIB of Conus consors (Singed cone).